Reading from the N-terminus, the 207-residue chain is Small ribosomal subunit protein uS4 (207 aa).

Residues 31–52 are disordered; it reads KAKFDSKPGQHGRTSGARTSDY. Residues 97 to 157 form the S4 RNA-binding domain; that stretch reads CRLDNVVYRM…DKSKKQARIV (61 aa).

Belongs to the universal ribosomal protein uS4 family. Part of the 30S ribosomal subunit. Contacts protein S5. The interaction surface between S4 and S5 is involved in control of translational fidelity.

One of the primary rRNA binding proteins, it binds directly to 16S rRNA where it nucleates assembly of the body of the 30S subunit. Its function is as follows. With S5 and S12 plays an important role in translational accuracy. This chain is Small ribosomal subunit protein uS4, found in Acidovorax sp. (strain JS42).